We begin with the raw amino-acid sequence, 230 residues long: Cytidylate kinase (230 aa).

ATP is bound at residue Gly-12–Thr-20.

Belongs to the cytidylate kinase family. Type 1 subfamily.

It localises to the cytoplasm. It carries out the reaction CMP + ATP = CDP + ADP. It catalyses the reaction dCMP + ATP = dCDP + ADP. This is Cytidylate kinase from Shewanella sediminis (strain HAW-EB3).